Consider the following 422-residue polypeptide: ATP-dependent Clp protease ATP-binding subunit ClpX 1 (422 aa).

Positions aspartate 4–glutamate 57 constitute a ClpX-type ZB domain. Zn(2+)-binding residues include cysteine 16, cysteine 19, cysteine 38, and cysteine 41. Proline 120–leucine 127 contacts ATP.

It belongs to the ClpX chaperone family. Component of the ClpX-ClpP complex. Forms a hexameric ring that, in the presence of ATP, binds to fourteen ClpP subunits assembled into a disk-like structure with a central cavity, resembling the structure of eukaryotic proteasomes.

In terms of biological role, ATP-dependent specificity component of the Clp protease. It directs the protease to specific substrates. Can perform chaperone functions in the absence of ClpP. In Methylococcus capsulatus (strain ATCC 33009 / NCIMB 11132 / Bath), this protein is ATP-dependent Clp protease ATP-binding subunit ClpX 1.